A 145-amino-acid chain; its full sequence is Nicking endonuclease (145 aa).

A disordered region spans residues 126–145; that stretch reads NPQEKTQVKTETKSGFARFL.

Its function is as follows. Endonuclease responsible for the single-chain interruptions (nicks) located at specific positions in the minus strand of the viral genome. The protein is Nicking endonuclease of Escherichia phage T5 (Enterobacteria phage T5).